Reading from the N-terminus, the 258-residue chain is Chymotrypsin-like elastase family member 1 (258 aa).

The N-terminal stretch at 1–8 (MLVLYGHS) is a signal peptide. A propeptide spans 9 to 18 (TQDVPETNAR) (activation peptide). Residues 19–256 (VVGGTEARRN…YITWINNVIA (238 aa)) enclose the Peptidase S1 domain. The cysteines at positions 48 and 64 are disulfide-linked. His-63 (charge relay system) is an active-site residue. Glu-77, Asn-79, Gln-82, and Glu-87 together coordinate Ca(2+). An N-linked (GlcNAc...) asparagine glycan is attached at Asn-79. Asp-111 serves as the catalytic Charge relay system. Disulfide bonds link Cys-145–Cys-212, Cys-176–Cys-192, and Cys-202–Cys-232. Ser-206 acts as the Charge relay system in catalysis. Asn-233 carries N-linked (GlcNAc...) asparagine glycosylation.

This sequence belongs to the peptidase S1 family. Elastase subfamily. It depends on Ca(2+) as a cofactor.

It is found in the secreted. The enzyme catalyses Hydrolysis of proteins, including elastin. Preferential cleavage: Ala-|-Xaa.. Serine proteases that hydrolyze many proteins in addition to elastin. The sequence is that of Chymotrypsin-like elastase family member 1 (CELA1) from Canis lupus familiaris (Dog).